A 349-amino-acid polypeptide reads, in one-letter code: SUMO-activating enzyme subunit 1 (349 aa).

Residue methionine 1 is modified to N-acetylmethionine. The residue at position 2 (valine 2) is an N-acetylvaline; in SUMO-activating enzyme subunit 1, N-terminally processed. Position 15 is a phosphoserine (serine 15). The residue at position 201 (lysine 201) is an N6-acetyllysine.

Belongs to the ubiquitin-activating E1 family. Heterodimer of SAE1 and UBA2/SAE2. The heterodimer corresponds to the two domains that are encoded on a single polypeptide chain in ubiquitin-activating enzyme E1. Interacts with UBE2I.

It is found in the nucleus. The protein operates within protein modification; protein sumoylation. Its function is as follows. The heterodimer acts as an E1 ligase for SUMO1, SUMO2, SUMO3, and probably SUMO4. It mediates ATP-dependent activation of SUMO proteins followed by formation of a thioester bond between a SUMO protein and a conserved active site cysteine residue on UBA2/SAE2. This Rattus norvegicus (Rat) protein is SUMO-activating enzyme subunit 1 (Sae1).